A 678-amino-acid polypeptide reads, in one-letter code: Pentatricopeptide repeat-containing protein At5g39980, chloroplastic (678 aa).

The N-terminal 64 residues, Met1–Glu64, are a transit peptide targeting the chloroplast. PPR repeat units follow at residues Ser154 to Pro188, Asp189 to Gly223, Asp224 to Pro258, Asp259 to Pro293, Asn294 to Leu328, Asp329 to Pro363, Asn364 to Gln398, Asn399 to Pro433, Asn434 to Ile468, Asp469 to Pro503, Asp535 to Pro569, Asp570 to Phe604, Pro605 to Val638, and Asn639 to Lys674.

Belongs to the PPR family. P subfamily.

Its subcellular location is the plastid. The protein resides in the chloroplast. The sequence is that of Pentatricopeptide repeat-containing protein At5g39980, chloroplastic from Arabidopsis thaliana (Mouse-ear cress).